A 204-amino-acid polypeptide reads, in one-letter code: LexA repressor (204 aa).

A DNA-binding region (H-T-H motif) is located at residues 31–51 (VREIGQAVGLKSSSTVHTHLV). Catalysis depends on for autocatalytic cleavage activity residues Ser128 and Lys165.

It belongs to the peptidase S24 family. As to quaternary structure, homodimer.

It carries out the reaction Hydrolysis of Ala-|-Gly bond in repressor LexA.. Its function is as follows. Represses a number of genes involved in the response to DNA damage (SOS response), including recA and lexA. In the presence of single-stranded DNA, RecA interacts with LexA causing an autocatalytic cleavage which disrupts the DNA-binding part of LexA, leading to derepression of the SOS regulon and eventually DNA repair. This is LexA repressor from Syntrophomonas wolfei subsp. wolfei (strain DSM 2245B / Goettingen).